The primary structure comprises 1159 residues: Dynein regulatory complex subunit 7 (1159 aa).

9 LRR repeats span residues 21 to 46 (MEARRTYRLNMGYAGLKQLPPGFVEL), 51 to 74 (NPHITELELSSNDLTDLPDELEEF), 75 to 97 (RYLRILRLKYNQLKRIPAVVYRL), 99 to 120 (QLMVFDASGNRIQKVDDAIGHL), 121 to 143 (SLLKELDVSGNEITTLPESLSTL), 144 to 166 (PKLEVLQVENNRLELLPESLGEL), 168 to 189 (GVIKMDLSTNNLRYLPASMGQL), 190 to 212 (KKVQRIDVGNNLLTKVPPSMGHL), and 214 to 235 (TLKEFNLRYNHLDDRYKAKVEE). Kelch repeat units follow at residues 309–360 (MLLI…YDEE), 363–413 (RLVV…FWAG), 415–463 (MVLF…IGHG), 465–513 (LLFV…VHRD), and 515–571 (LYLL…LWNG). Over residues 827–837 (EDRGMRSRADG) the composition is skewed to basic and acidic residues. The disordered stretch occupies residues 827-857 (EDRGMRSRADGNADESETEGGGGLDDGEGVE). A coiled-coil region spans residues 1050–1137 (VRIKAEESEE…RRLRRHEEQA (88 aa)).

This sequence belongs to the DRC7 family. Component of the nexin-dynein regulatory complex (N-DRC). Interacts with DRC5. In terms of processing, phosphorylated.

The protein localises to the cell projection. Its subcellular location is the cilium. It is found in the flagellum. It localises to the cytoplasm. The protein resides in the cytoskeleton. The protein localises to the cilium axoneme. Its subcellular location is the flagellum axoneme. In terms of biological role, component of the nexin-dynein regulatory complex (N-DRC) a key regulator of ciliary/flagellar motility which maintains the alignment and integrity of the distal axoneme and regulates microtubule sliding in motile axonemes. Involved in the regulation of flagellar motility. In Chlamydomonas reinhardtii (Chlamydomonas smithii), this protein is Dynein regulatory complex subunit 7 (DRC7).